The following is a 714-amino-acid chain: EtfAB:quinone oxidoreductase (714 aa).

The next 6 helical transmembrane spans lie at 25–45 (YEWLIYVIMLIPVSVFLFGFW), 87–107 (AGWMHAFLFWGFLVLFLAAGI), 125–145 (IGFSWVVDVLGFLALIGVMVL), 164–184 (DGWIILLIFAILLTGYFIEGL), 207–227 (PFGWMFASFFGSMSVDAMLMW), and 236–256 (MAIAFLFIALVPFTKLWHIFA). 4Fe-4S ferredoxin-type domains are found at residues 293–324 (WKDLLDLDSCIRCGRCQENCPAYNTGKHLNPK) and 375–405 (YDVVGSETIWDCTNCRACMEHCPMFIEHIPK). [4Fe-4S] cluster-binding residues include C302, C305, C308, C312, C386, C389, C392, and C396.

As to quaternary structure, might constitute a membrane-associated complex with EtfA (Swol_0697), EtfB (Swol_0696), and the butyryl-CoA dehydrogenase Swol_1933 and/or Swol_2052. [4Fe-4S] cluster is required as a cofactor.

It localises to the cell membrane. The protein operates within lipid metabolism; butanoate metabolism. Oxidoreductase involved in syntrophic growth of S.wolfei with butyrate. Is presumed to link the electron flow from butyryl-CoA dehydrogenases to the membrane, in conjunction with the electron transfer flavoprotein EtfAB. May transfer electrons to the menaquinone pool of the membrane. The chain is EtfAB:quinone oxidoreductase from Syntrophomonas wolfei subsp. wolfei (strain DSM 2245B / Goettingen).